Consider the following 1426-residue polypeptide: Phospholipid-transporting ATPase VD (1426 aa).

The Cytoplasmic segment spans residues 1–97 (MTEALQWARY…PRNLFEQFHR (97 aa)). The helical transmembrane segment at 98 to 118 (AANLYFLFLVVLNWVPLVEAF) threads the bilayer. Residues 119 to 121 (QKE) lie on the Exoplasmic loop side of the membrane. The chain crosses the membrane as a helical span at residues 122-142 (ITMLPLVVVLTIIAIKDGLED). The Cytoplasmic segment spans residues 143 to 321 (YRKYKIDKQI…SKLERRANTD (179 aa)). Residues 322–342 (VLWCVMLLVIMCLTGAVGHGI) traverse the membrane as a helical segment. Topologically, residues 343-365 (WLSRYEKMHFFNVPEPDGHIISP) are exoplasmic loop. Residues 366 to 386 (LLAGFYMFWTMIILLQVLIPI) form a helical membrane-spanning segment. The Cytoplasmic segment spans residues 387–1113 (SLYVSIEIVK…HWCYTRLSNM (727 aa)). Asp-438 serves as the catalytic 4-aspartylphosphate intermediate. Positions 438, 439, and 440 each coordinate ATP. Asp-438 is a binding site for Mg(2+). Residue Thr-440 coordinates Mg(2+). The tract at residues 506–531 (NGPLGNKPSNHLAGSSFTLGSGEGAS) is disordered. A compositionally biased stretch (polar residues) spans 512-524 (KPSNHLAGSSFTL). ATP-binding positions include Glu-730, Phe-772, Lys-796, Arg-840, Thr-920, Gly-921, Asp-922, 996–1003 (GLIITGKT), Arg-1030, and Lys-1036. Asp-1056 lines the Mg(2+) pocket. Residues Asn-1059 and Asp-1060 each coordinate ATP. Asp-1060 is a Mg(2+) binding site. A helical transmembrane segment spans residues 1114-1134 (ILYFFYKNVAYVNLLFWYQFF). Residues 1135–1145 (CGFSGTSMTDY) are Exoplasmic loop-facing. Residues 1146–1166 (WVLIFFNLLFTSAPPVIYGVL) form a helical membrane-spanning segment. Residues 1167 to 1195 (EKDVSAETLMQLPELYRSGQKSEAYLPHT) lie on the Cytoplasmic side of the membrane. The chain crosses the membrane as a helical span at residues 1196 to 1216 (FWITLLDAFYQSLVCFFVPYF). At 1217–1224 (TYQGSDTD) the chain is on the exoplasmic loop side. The chain crosses the membrane as a helical span at residues 1225 to 1245 (IFAFGNPLNTAALFIVLLHLV). Over 1246–1252 (IESKSLT) the chain is Cytoplasmic. Residues 1253–1273 (WIHLLVIIGSILSYFLFAIVF) traverse the membrane as a helical segment. Residues 1274-1292 (GAMCVTCNPPSNPYWIMQE) are Exoplasmic loop-facing. Residues 1293–1313 (HMLDPVFYLVCILTTSIALLP) traverse the membrane as a helical segment. At 1314-1426 (RFVYRVLQGS…MAGPSKGKES (113 aa)) the chain is on the cytoplasmic side. 1364 to 1371 (ANQSAGKS) provides a ligand contact to ATP.

Belongs to the cation transport ATPase (P-type) (TC 3.A.3) family. Type IV subfamily. Component of a P4-ATPase flippase complex which consists of a catalytic alpha subunit ATP10A and an accessory beta subunit TMEM30A. It depends on Mg(2+) as a cofactor. In terms of processing, autophosphorylated at the conserved aspartate of the P-type ATPase signature sequence. As to expression, expressed in placenta and, to a lesser extent, in kidney.

Its subcellular location is the cell membrane. The protein localises to the endoplasmic reticulum membrane. It carries out the reaction ATP + H2O + phospholipidSide 1 = ADP + phosphate + phospholipidSide 2.. The enzyme catalyses a beta-D-glucosyl-(1&lt;-&gt;1')-N-acylsphing-4-enine(out) + ATP + H2O = a beta-D-glucosyl-(1&lt;-&gt;1')-N-acylsphing-4-enine(in) + ADP + phosphate + H(+). Catalytic component of a P4-ATPase flippase complex, which catalyzes the hydrolysis of ATP coupled to the transport of glucosylceramide (GlcCer) from the outer to the inner leaflet of the plasma membrane. This Homo sapiens (Human) protein is Phospholipid-transporting ATPase VD.